A 298-amino-acid polypeptide reads, in one-letter code: Probable endonuclease 4 (298 aa).

Residues H69, H111, E146, D180, H183, H215, D228, H230, and E260 each coordinate Zn(2+).

Belongs to the AP endonuclease 2 family. Requires Zn(2+) as cofactor.

It carries out the reaction Endonucleolytic cleavage to 5'-phosphooligonucleotide end-products.. Its function is as follows. Endonuclease IV plays a role in DNA repair. It cleaves phosphodiester bonds at apurinic or apyrimidinic (AP) sites, generating a 3'-hydroxyl group and a 5'-terminal sugar phosphate. The protein is Probable endonuclease 4 of Bacillus mycoides (strain KBAB4) (Bacillus weihenstephanensis).